The sequence spans 85 residues: MAPPLSPGSRVLIALIRVYQRLISPLLGPHCRFTPTCSSYGIEALRRFGVIKGSWLTVKRVLKCHPLHPGGDDPVPPGPFDTREH.

This sequence belongs to the UPF0161 family.

The protein localises to the cell inner membrane. In terms of biological role, could be involved in insertion of integral membrane proteins into the membrane. The protein is Putative membrane protein insertion efficiency factor of Escherichia fergusonii (strain ATCC 35469 / DSM 13698 / CCUG 18766 / IAM 14443 / JCM 21226 / LMG 7866 / NBRC 102419 / NCTC 12128 / CDC 0568-73).